Here is a 925-residue protein sequence, read N- to C-terminus: GPI ethanolamine phosphate transferase 1 (925 aa).

Residues 1–6 (MWNKHR) lie on the Cytoplasmic side of the membrane. A helical membrane pass occupies residues 7-27 (LAFILVGLLFHLFYLRSIFDI). Topologically, residues 28 to 457 (YFVSPLVHGM…TTYNWRFIRS (430 aa)) are lumenal. 6 N-linked (GlcNAc...) asparagine glycosylation sites follow: N90, N138, N198, N286, N312, and N358. The helical transmembrane segment at 458–478 (IVTLGFIGWITYSFTIFLRLF) threads the bilayer. The Cytoplasmic portion of the chain corresponds to 479-492 (ILEKQYAMKTSPQN). Residues 493 to 510 (LASFGALTAALNYVLYYQ) form a helical membrane-spanning segment. Topologically, residues 511–516 (RSPFNY) are lumenal. The helical transmembrane segment at 517-537 (YMYLLFPLFFWSQILTNSTIL) threads the bilayer. Residues 538–547 (HDGIREMFKG) lie on the Cytoplasmic side of the membrane. A helical transmembrane segment spans residues 548–568 (VSMLQRIGICALIVSIYEGIV). Residues 569-574 (YGYFDR) are Lumenal-facing. Residues 575–595 (WIFTIIFNLLALYPFFCGIKD) form a helical membrane-spanning segment. Residues 596–599 (AKTN) lie on the Cytoplasmic side of the membrane. Residues 600 to 620 (MFWGANSMALSIFTLFDAVKI) traverse the membrane as a helical segment. Residue E621 is a topological domain, lumenal. A helical membrane pass occupies residues 622-642 (SLTQINVSGLLLVASGLYALW). Over 643 to 653 (RVSKKINSHTK) the chain is Cytoplasmic. Residues 654–674 (IVILLQILLLAMMLAVTNKSV) traverse the membrane as a helical segment. Over 675–687 (TSLQQRAGLPTDA) the chain is Lumenal. Residues 688 to 708 (KIAGWVILTLSLSLMPLLHYL) traverse the membrane as a helical segment. Over 709–719 (KPSNDYQVRVL) the chain is Cytoplasmic. A helical transmembrane segment spans residues 720–740 (VIYLTFAPTFLILTISFESFF). The Lumenal portion of the chain corresponds to 741-775 (YLLFTNYLMLWIEIESKIKAQNIAKNSQNWLQLLR). Residues 776–796 (ISIIGFFLLQFAFFGTGNVAS) traverse the membrane as a helical segment. Residues 797-818 (ISSFSLDSVYRLMPVFDPFPMG) are Cytoplasmic-facing. The chain crosses the membrane as a helical span at residues 819–839 (ALLILKIMIPYILLSTALGIM). The Lumenal segment spans residues 840–848 (NLKLNIKDY). Residues 849-869 (TVSSLILSTSDVLSLNFFYLL) form a helical membrane-spanning segment. At 870-885 (RTEGSWLDIGVTISNY) the chain is on the cytoplasmic side. Residues 886–906 (CLAILSSLFMIVLELFSHFLL) form a helical membrane-spanning segment. The Lumenal portion of the chain corresponds to 907-925 (KNVRDNGMDIAASKQQKRH).

It belongs to the PIGG/PIGN/PIGO family. PIGN subfamily.

It is found in the endoplasmic reticulum membrane. It functions in the pathway glycolipid biosynthesis; glycosylphosphatidylinositol-anchor biosynthesis. Its function is as follows. Ethanolamine phosphate transferase involved in glycosylphosphatidylinositol-anchor biosynthesis. Transfers ethanolamine phosphate to the first alpha-1,4-linked mannose of the glycosylphosphatidylinositol precursor of GPI-anchor. In Eremothecium gossypii (strain ATCC 10895 / CBS 109.51 / FGSC 9923 / NRRL Y-1056) (Yeast), this protein is GPI ethanolamine phosphate transferase 1 (MCD4).